The primary structure comprises 330 residues: Putative glycosyltransferase ORF330 (330 aa).

Belongs to the glycosyltransferase group 1 family. Glycosyltransferase 4 subfamily.

In Acidianus filamentous virus 2 (isolate Italy/Pozzuoli) (AFV-2), this protein is Putative glycosyltransferase ORF330.